The sequence spans 643 residues: Protein disulfide-isomerase A4 (643 aa).

Residues Met1–Ala20 form the signal peptide. Thioredoxin domains follow at residues Ala21–Gln167 and Gln167–Lys299. The disordered stretch occupies residues Ala24–Glu58. Acidic residues predominate over residues Ser32–Val56. The short motif at Cys89 to Cys92 is the CXXC element. Intrachain disulfides connect Cys89-Cys92 and Cys204-Cys207. An N6-acetyllysine modification is found at Lys364. One can recognise a Thioredoxin 3 domain in the interval Phe503–Thr634. Residues Cys553 to Cys556 carry the CXXC motif. Cys553 and Cys556 are disulfide-bonded. The Prevents secretion from ER motif lies at Lys640–Leu643.

This sequence belongs to the protein disulfide isomerase family. As to quaternary structure, part of a large chaperone multiprotein complex comprising DNAJB11, HSP90B1, HSPA5, HYOU, PDIA2, PDIA4, PDIA6, PPIB, SDF2L1, UGGT1 and very small amounts of ERP29, but not, or at very low levels, CALR nor CANX. Component of a complex containing at least CRELD2, MANF, MATN3 and PDIA4. O-glycosylated.

It localises to the endoplasmic reticulum lumen. The protein resides in the melanosome. The enzyme catalyses Catalyzes the rearrangement of -S-S- bonds in proteins.. This chain is Protein disulfide-isomerase A4 (Pdia4), found in Rattus norvegicus (Rat).